A 315-amino-acid chain; its full sequence is Microtubule-associated protein Jupiter (315 aa).

A compositionally biased stretch (polar residues) spans 1–14 (MISNFDCTDNQASS). 2 disordered regions span residues 1-37 (MISN…QTPR) and 51-89 (EKDN…PGKN). At Ser24 the chain carries Phosphoserine. Position 35 is a phosphothreonine (Thr35). The span at 62 to 76 (APRRGQKTVDSHSRL) shows a compositional bias: basic and acidic residues. Residues Thr81 and Thr85 each carry the phosphothreonine modification. A phosphoserine mark is found at Ser94, Ser122, and Ser133. 2 disordered regions span residues 116–166 (YNGK…ADDA) and 272–315 (EGNP…SGLW). Residues 120 to 133 (SGSVSSASSSVSSS) are compositionally biased toward low complexity. Composition is skewed to polar residues over residues 134 to 148 (TENL…SVFR) and 285 to 296 (DFTQRQESSNGG).

The protein belongs to the MAP Jupiter family.

Its subcellular location is the nucleus. It is found in the cytoplasm. The protein localises to the cytoskeleton. It localises to the spindle. Binds to all microtubule populations. This Drosophila sechellia (Fruit fly) protein is Microtubule-associated protein Jupiter.